The primary structure comprises 128 residues: Large ribosomal subunit protein eL31 (128 aa).

This sequence belongs to the eukaryotic ribosomal protein eL31 family.

The protein is Large ribosomal subunit protein eL31 (RpL31) of Drosophila virilis (Fruit fly).